The chain runs to 258 residues: Probable parvulin-type peptidyl-prolyl cis-trans isomerase (258 aa).

Positions 1 to 19 are cleaved as a signal peptide; it reads MKRIAMLAAACVIAVPAFA. The PpiC domain occupies 127–219; the sequence is KMEYKVRHIL…FGWHVIQVDD (93 aa). Over residues 158 to 175 the composition is skewed to basic and acidic residues; sequence DDLAKKNSKDPGSAERGG. The segment at 158–178 is disordered; sequence DDLAKKNSKDPGSAERGGDLG.

Belongs to the PpiC/parvulin rotamase family.

It catalyses the reaction [protein]-peptidylproline (omega=180) = [protein]-peptidylproline (omega=0). The protein is Probable parvulin-type peptidyl-prolyl cis-trans isomerase of Bordetella bronchiseptica (strain ATCC BAA-588 / NCTC 13252 / RB50) (Alcaligenes bronchisepticus).